A 232-amino-acid polypeptide reads, in one-letter code: Phosphoribosylformylglycinamidine synthase subunit PurQ (232 aa).

The Glutamine amidotransferase type-1 domain maps to 2–232 (KIAIIQFGGT…SMADYITENF (231 aa)). Residue C86 is the Nucleophile of the active site. Residues H203 and E205 contribute to the active site.

Part of the FGAM synthase complex composed of 1 PurL, 1 PurQ and 2 PurS subunits.

It is found in the cytoplasm. It carries out the reaction N(2)-formyl-N(1)-(5-phospho-beta-D-ribosyl)glycinamide + L-glutamine + ATP + H2O = 2-formamido-N(1)-(5-O-phospho-beta-D-ribosyl)acetamidine + L-glutamate + ADP + phosphate + H(+). The enzyme catalyses L-glutamine + H2O = L-glutamate + NH4(+). It functions in the pathway purine metabolism; IMP biosynthesis via de novo pathway; 5-amino-1-(5-phospho-D-ribosyl)imidazole from N(2)-formyl-N(1)-(5-phospho-D-ribosyl)glycinamide: step 1/2. Functionally, part of the phosphoribosylformylglycinamidine synthase complex involved in the purines biosynthetic pathway. Catalyzes the ATP-dependent conversion of formylglycinamide ribonucleotide (FGAR) and glutamine to yield formylglycinamidine ribonucleotide (FGAM) and glutamate. The FGAM synthase complex is composed of three subunits. PurQ produces an ammonia molecule by converting glutamine to glutamate. PurL transfers the ammonia molecule to FGAR to form FGAM in an ATP-dependent manner. PurS interacts with PurQ and PurL and is thought to assist in the transfer of the ammonia molecule from PurQ to PurL. The protein is Phosphoribosylformylglycinamidine synthase subunit PurQ of Methanosarcina mazei (strain ATCC BAA-159 / DSM 3647 / Goe1 / Go1 / JCM 11833 / OCM 88) (Methanosarcina frisia).